Reading from the N-terminus, the 178-residue chain is N-alpha-acetyltransferase 20 (178 aa).

The N-acetyltransferase domain maps to 2-157; the sequence is TSLRPFTCDD…DAYDMRKALS (156 aa). The disordered stretch occupies residues 159–178; sequence DTEKKSIVPLPHPVRPEDIE.

Belongs to the acetyltransferase family. ARD1 subfamily. As to quaternary structure, component of the N-terminal acetyltransferase B (NatB) complex which is composed of naa20 and naa25.

Its subcellular location is the cytoplasm. It localises to the nucleus. The enzyme catalyses N-terminal L-methionyl-L-asparaginyl-[protein] + acetyl-CoA = N-terminal N(alpha)-acetyl-L-methionyl-L-asparaginyl-[protein] + CoA + H(+). It catalyses the reaction N-terminal L-methionyl-L-glutaminyl-[protein] + acetyl-CoA = N-terminal N(alpha)-acetyl-L-methionyl-L-glutaminyl-[protein] + CoA + H(+). It carries out the reaction N-terminal L-methionyl-L-aspartyl-[protein] + acetyl-CoA = N-terminal N(alpha)-acetyl-L-methionyl-L-aspartyl-[protein] + CoA + H(+). The catalysed reaction is N-terminal L-methionyl-L-glutamyl-[protein] + acetyl-CoA = N-terminal N(alpha)-acetyl-L-methionyl-L-glutamyl-[protein] + CoA + H(+). In terms of biological role, catalytic subunit of the NatB complex which catalyzes acetylation of the N-terminal methionine residues of peptides beginning with Met-Asp, Met-Glu, Met-Asn and Met-Gln. Proteins with cell cycle functions are overrepresented in the pool of NatB substrates. Required for maintaining the structure and function of actomyosin fibers and for proper cellular migration. This chain is N-alpha-acetyltransferase 20 (naa20), found in Xenopus tropicalis (Western clawed frog).